The sequence spans 307 residues: Thymidylate synthase (307 aa).

Residues arginine 26 and arginine 160–arginine 161 contribute to the dUMP site. Cysteine 180 acts as the Nucleophile in catalysis. DUMP-binding positions include arginine 209 to aspartate 212, asparagine 220, and histidine 250 to tyrosine 252. Aspartate 212 is a binding site for (6R)-5,10-methylene-5,6,7,8-tetrahydrofolate. Position 306 (alanine 306) interacts with (6R)-5,10-methylene-5,6,7,8-tetrahydrofolate.

This sequence belongs to the thymidylate synthase family. Bacterial-type ThyA subfamily. As to quaternary structure, homodimer.

It localises to the cytoplasm. The catalysed reaction is dUMP + (6R)-5,10-methylene-5,6,7,8-tetrahydrofolate = 7,8-dihydrofolate + dTMP. It functions in the pathway pyrimidine metabolism; dTTP biosynthesis. In terms of biological role, catalyzes the reductive methylation of 2'-deoxyuridine-5'-monophosphate (dUMP) to 2'-deoxythymidine-5'-monophosphate (dTMP) while utilizing 5,10-methylenetetrahydrofolate (mTHF) as the methyl donor and reductant in the reaction, yielding dihydrofolate (DHF) as a by-product. This enzymatic reaction provides an intracellular de novo source of dTMP, an essential precursor for DNA biosynthesis. The polypeptide is Thymidylate synthase (Rhizobium rhizogenes (strain K84 / ATCC BAA-868) (Agrobacterium radiobacter)).